Consider the following 414-residue polypeptide: Tryptophan synthase beta chain (414 aa).

Positions 1-26 (MVSTFSRQDQNYKNDDLNQPSKEGRF) are disordered. The segment covering 10-26 (QNYKNDDLNQPSKEGRF) has biased composition (basic and acidic residues). K109 carries the post-translational modification N6-(pyridoxal phosphate)lysine.

This sequence belongs to the TrpB family. In terms of assembly, tetramer of two alpha and two beta chains. Pyridoxal 5'-phosphate serves as cofactor.

The enzyme catalyses (1S,2R)-1-C-(indol-3-yl)glycerol 3-phosphate + L-serine = D-glyceraldehyde 3-phosphate + L-tryptophan + H2O. It participates in amino-acid biosynthesis; L-tryptophan biosynthesis; L-tryptophan from chorismate: step 5/5. The beta subunit is responsible for the synthesis of L-tryptophan from indole and L-serine. In Prochlorococcus marinus (strain MIT 9312), this protein is Tryptophan synthase beta chain.